Reading from the N-terminus, the 339-residue chain is Heat-inducible transcription repressor HrcA (339 aa).

The protein belongs to the HrcA family.

In terms of biological role, negative regulator of class I heat shock genes (grpE-dnaK-dnaJ and groELS operons). Prevents heat-shock induction of these operons. This is Heat-inducible transcription repressor HrcA from Cutibacterium acnes (strain DSM 16379 / KPA171202) (Propionibacterium acnes).